The sequence spans 375 residues: tRNA-specific 2-thiouridylase MnmA (375 aa).

ATP-binding positions include 9–16 and L35; that span reads AMSGGVDS. The active-site Nucleophile is the C105. C105 and C201 are joined by a disulfide. G129 lines the ATP pocket. The segment at 151-153 is interaction with tRNA; the sequence is KNQ. The Cysteine persulfide intermediate role is filled by C201. The interval 307 to 308 is interaction with tRNA; the sequence is RY.

This sequence belongs to the MnmA/TRMU family.

Its subcellular location is the cytoplasm. It carries out the reaction S-sulfanyl-L-cysteinyl-[protein] + uridine(34) in tRNA + AH2 + ATP = 2-thiouridine(34) in tRNA + L-cysteinyl-[protein] + A + AMP + diphosphate + H(+). Functionally, catalyzes the 2-thiolation of uridine at the wobble position (U34) of tRNA, leading to the formation of s(2)U34. The protein is tRNA-specific 2-thiouridylase MnmA of Leptospira interrogans serogroup Icterohaemorrhagiae serovar Lai (strain 56601).